Here is a 339-residue protein sequence, read N- to C-terminus: Starvation-sensing protein RspB (339 aa).

Zn(2+) is bound by residues Cys-37, His-59, Cys-89, Cys-92, Cys-95, Cys-103, and Glu-144.

It belongs to the zinc-containing alcohol dehydrogenase family. Requires Zn(2+) as cofactor.

In terms of biological role, not known; probable catabolic enzyme. This chain is Starvation-sensing protein RspB, found in Escherichia coli (strain K12).